A 621-amino-acid polypeptide reads, in one-letter code: Chaperone protein HscA homolog (621 aa).

This sequence belongs to the heat shock protein 70 family.

Chaperone involved in the maturation of iron-sulfur cluster-containing proteins. Has a low intrinsic ATPase activity which is markedly stimulated by HscB. In Cupriavidus metallidurans (strain ATCC 43123 / DSM 2839 / NBRC 102507 / CH34) (Ralstonia metallidurans), this protein is Chaperone protein HscA homolog.